The primary structure comprises 251 residues: Ubiquinone/menaquinone biosynthesis C-methyltransferase UbiE (251 aa).

S-adenosyl-L-methionine is bound by residues Thr-74, Asp-95, and 123–124 (NA).

It belongs to the class I-like SAM-binding methyltransferase superfamily. MenG/UbiE family.

The enzyme catalyses a 2-demethylmenaquinol + S-adenosyl-L-methionine = a menaquinol + S-adenosyl-L-homocysteine + H(+). The catalysed reaction is a 2-methoxy-6-(all-trans-polyprenyl)benzene-1,4-diol + S-adenosyl-L-methionine = a 5-methoxy-2-methyl-3-(all-trans-polyprenyl)benzene-1,4-diol + S-adenosyl-L-homocysteine + H(+). It functions in the pathway quinol/quinone metabolism; menaquinone biosynthesis; menaquinol from 1,4-dihydroxy-2-naphthoate: step 2/2. Its pathway is cofactor biosynthesis; ubiquinone biosynthesis. Functionally, methyltransferase required for the conversion of demethylmenaquinol (DMKH2) to menaquinol (MKH2) and the conversion of 2-polyprenyl-6-methoxy-1,4-benzoquinol (DDMQH2) to 2-polyprenyl-3-methyl-6-methoxy-1,4-benzoquinol (DMQH2). The chain is Ubiquinone/menaquinone biosynthesis C-methyltransferase UbiE from Erwinia tasmaniensis (strain DSM 17950 / CFBP 7177 / CIP 109463 / NCPPB 4357 / Et1/99).